The primary structure comprises 704 residues: 1,4-alpha-glucan-branching enzyme (704 aa).

Positions 94 and 131 each coordinate (1,4-alpha-D-glucosyl)n. A Phosphoserine modification is found at Ser-190. The Nucleophile role is filled by Asp-356. Glu-417 acts as the Proton donor in catalysis.

The protein belongs to the glycosyl hydrolase 13 family. GlgB subfamily.

The protein localises to the cytoplasm. It carries out the reaction Transfers a segment of a (1-&gt;4)-alpha-D-glucan chain to a primary hydroxy group in a similar glucan chain.. It functions in the pathway glycan biosynthesis; glycogen biosynthesis. Glycogen-branching enzyme participates in the glycogen biosynthetic process along with glycogenin and glycogen synthase. Generates alpha-1,6-glucosidic branches from alpha-1,4-linked glucose chains, to increase solubility of the glycogen polymer. The chain is 1,4-alpha-glucan-branching enzyme (GLC3) from Saccharomyces cerevisiae (strain ATCC 204508 / S288c) (Baker's yeast).